Reading from the N-terminus, the 105-residue chain is Dicamba O-demethylase, ferredoxin component (105 aa).

The 2Fe-2S ferredoxin-type domain maps to 2–105; the sequence is PQITVVNQSG…GIKVTIAQED (104 aa). [2Fe-2S] cluster is bound by residues Cys-40, Cys-46, Cys-49, and Cys-86.

The protein belongs to the adrenodoxin/putidaredoxin family. As to quaternary structure, monomer. The dicamba O-demethylase multicomponent enzyme system is composed of an oxygenase component (DdmC) and an electron transfer component formed by a ferredoxin reductase (DdmA1) and a ferredoxin (DdmB). In vitro, dicamba O-demethylase assays in which DdmA2 is substituted for DdmA1 demonstrate that the two enzymes possess nearly identical activities. [2Fe-2S] cluster is required as a cofactor.

Functionally, component of the dicamba O-demethylase multicomponent enzyme system involved in the degradation of the herbicide dicamba. In vitro, functions as an intermediate electron transfer protein. This Stenotrophomonas maltophilia (Pseudomonas maltophilia) protein is Dicamba O-demethylase, ferredoxin component.